A 195-amino-acid chain; its full sequence is dTTP/UTP pyrophosphatase (195 aa).

Asp70 functions as the Proton acceptor in the catalytic mechanism.

This sequence belongs to the Maf family. YhdE subfamily. It depends on a divalent metal cation as a cofactor.

It is found in the cytoplasm. The catalysed reaction is dTTP + H2O = dTMP + diphosphate + H(+). The enzyme catalyses UTP + H2O = UMP + diphosphate + H(+). Functionally, nucleoside triphosphate pyrophosphatase that hydrolyzes dTTP and UTP. May have a dual role in cell division arrest and in preventing the incorporation of modified nucleotides into cellular nucleic acids. This is dTTP/UTP pyrophosphatase from Methanococcoides burtonii (strain DSM 6242 / NBRC 107633 / OCM 468 / ACE-M).